Reading from the N-terminus, the 140-residue chain is Class I hydrophobin C (140 aa).

An N-terminal signal peptide occupies residues 1–23 (MKFFVPAFLFAATAMALPGSGSA). 4 cysteine pairs are disulfide-bonded: Cys41–Cys114, Cys49–Cys108, Cys50–Cys85, and Cys115–Cys133.

It belongs to the fungal hydrophobin family.

The protein resides in the secreted. It is found in the cell wall. Aerial growth, conidiation, and dispersal of filamentous fungi in the environment rely upon a capability of their secreting small amphipathic proteins called hydrophobins (HPBs) with low sequence identity. Class I can self-assemble into an outermost layer of rodlet bundles on aerial cell surfaces, conferring cellular hydrophobicity that supports fungal growth, development and dispersal; whereas Class II form highly ordered films at water-air interfaces through intermolecular interactions but contribute nothing to the rodlet structure. In P.expansum, hydrophobins contribute to germination, tolerance to cold stress and mycotoxins patulin and citrinin production. HfbC is involved in the virulence on apple. This Penicillium expansum (Blue mold rot fungus) protein is Class I hydrophobin C.